The primary structure comprises 576 residues: Threonine dehydratase, mitochondrial (576 aa).

Lysine 109 carries the post-translational modification N6-(pyridoxal phosphate)lysine. ACT-like domains follow at residues valine 393–aspartate 473 and arginine 495–aspartate 566.

It belongs to the serine/threonine dehydratase family. Homotetramer. The cofactor is pyridoxal 5'-phosphate.

The protein localises to the mitochondrion. It catalyses the reaction L-threonine = 2-oxobutanoate + NH4(+). Its pathway is amino-acid biosynthesis; L-isoleucine biosynthesis; 2-oxobutanoate from L-threonine: step 1/1. Isoleucine allosterically inhibits while valine allosterically activates this enzyme. The protein is Threonine dehydratase, mitochondrial (ILV1) of Saccharomyces cerevisiae (strain ATCC 204508 / S288c) (Baker's yeast).